A 500-amino-acid chain; its full sequence is Probable cytosol aminopeptidase (500 aa).

Residues K261 and D266 each coordinate Mn(2+). K273 is an active-site residue. 3 residues coordinate Mn(2+): D284, D343, and E345. R347 is an active-site residue.

Belongs to the peptidase M17 family. It depends on Mn(2+) as a cofactor.

The protein localises to the cytoplasm. The enzyme catalyses Release of an N-terminal amino acid, Xaa-|-Yaa-, in which Xaa is preferably Leu, but may be other amino acids including Pro although not Arg or Lys, and Yaa may be Pro. Amino acid amides and methyl esters are also readily hydrolyzed, but rates on arylamides are exceedingly low.. It catalyses the reaction Release of an N-terminal amino acid, preferentially leucine, but not glutamic or aspartic acids.. Its function is as follows. Presumably involved in the processing and regular turnover of intracellular proteins. Catalyzes the removal of unsubstituted N-terminal amino acids from various peptides. This is Probable cytosol aminopeptidase (pepA) from Bacillus subtilis (strain 168).